The primary structure comprises 608 residues: RAS guanyl-releasing protein 2 (608 aa).

The N-terminal Ras-GEF domain maps to 4-126 (TLDLDKGCTV…SLIDIESVPT (123 aa)). Ser-116, Ser-117, and Ser-147 each carry phosphoserine. The region spanning 154 to 387 (EPMELAEHLT…YQLSLQREPR (234 aa)) is the Ras-GEF domain. Residues 382–405 (LQREPRSKSSPTSPTSCTPPPRPP) form a disordered region. EF-hand domains lie at 426 to 461 (HIEK…FPYL) and 463 to 490 (AFGD…SSSV). The Ca(2+) site is built by Asp-439, Asp-441, Asp-443, His-445, Glu-450, Asp-468, Asn-470, Asp-472, Cys-474, and Glu-479. A Phorbol-ester/DAG-type zinc finger spans residues 498-548 (VHNFQESNSLRPVACRHCKALILGIYKQGLKCRACGVNCHKQCKERLSVEC). Phosphoserine is present on residues Ser-554 and Ser-575. Positions 555 to 596 (VSLEGSAPSPSPTHTHHRAFSFSLPRPGRRSSRPPEIREEEV) are disordered.

This sequence belongs to the RASGRP family. As to quaternary structure, forms a signaling complex with RAP1 and BRAF. Interacts with F-actin. Interacts with RAP1. Detected in megakaryocytes, platelet and neutrophils but not in lymphocytes (at protein level). Isoform 1 and isoform 3 are detected in brain basal glanglia, heart, lung, spleen, liver and kidney interstitial cells.

The protein resides in the cytoplasm. It localises to the cytosol. Its subcellular location is the cell membrane. The protein localises to the synapse. It is found in the synaptosome. The protein resides in the cell projection. It localises to the ruffle membrane. Functionally, functions as a calcium- and DAG-regulated nucleotide exchange factor specifically activating Rap through the exchange of bound GDP for GTP. May also activate other GTPases such as RRAS, RRAS2, NRAS, KRAS but not HRAS. Functions in aggregation of platelets and adhesion of T-lymphocytes and neutrophils probably through inside-out integrin activation. May function in the muscarinic acetylcholine receptor M1/CHRM1 signaling pathway. The polypeptide is RAS guanyl-releasing protein 2 (Rasgrp2) (Mus musculus (Mouse)).